A 408-amino-acid polypeptide reads, in one-letter code: Putative UPF0496 protein 2 (408 aa).

A run of 2 helical transmembrane segments spans residues 224 to 244 (RIARGTAAAALVGACAAAIVA) and 252 to 272 (ALVGIGVAAAAFGATPAGAAR). The interval 385-408 (MARGLPPPSPATVTTTSEERLTSS) is disordered.

It belongs to the UPF0496 family.

The protein localises to the membrane. This is Putative UPF0496 protein 2 from Oryza sativa subsp. indica (Rice).